The sequence spans 420 residues: Glutamyl-tRNA reductase (420 aa).

Residues 49 to 52, S110, 115 to 117, and Q121 contribute to the substrate site; these read TCNR and EHQ. C50 acts as the Nucleophile in catalysis. Residue 190–195 participates in NADP(+) binding; it reads GSGTIN.

Belongs to the glutamyl-tRNA reductase family. As to quaternary structure, homodimer.

It catalyses the reaction (S)-4-amino-5-oxopentanoate + tRNA(Glu) + NADP(+) = L-glutamyl-tRNA(Glu) + NADPH + H(+). It functions in the pathway porphyrin-containing compound metabolism; protoporphyrin-IX biosynthesis; 5-aminolevulinate from L-glutamyl-tRNA(Glu): step 1/2. In terms of biological role, catalyzes the NADPH-dependent reduction of glutamyl-tRNA(Glu) to glutamate 1-semialdehyde (GSA). This is Glutamyl-tRNA reductase from Wigglesworthia glossinidia brevipalpis.